A 493-amino-acid chain; its full sequence is Cytochrome P450 2E1 (493 aa).

298 to 303 is a substrate binding site; that stretch reads FAGTET. Heme is bound at residue C437.

It belongs to the cytochrome P450 family. In terms of assembly, interacts with chaperones HSP70 and HSP90; this interaction is required for initial targeting to mitochondria. It depends on heme as a cofactor.

The protein localises to the endoplasmic reticulum membrane. It is found in the microsome membrane. The protein resides in the mitochondrion inner membrane. It carries out the reaction an organic molecule + reduced [NADPH--hemoprotein reductase] + O2 = an alcohol + oxidized [NADPH--hemoprotein reductase] + H2O + H(+). The enzyme catalyses (5Z,8Z,11Z)-eicosatrienoate + reduced [NADPH--hemoprotein reductase] + O2 = 19-hydroxy-(5Z,8Z,11Z)-eicosatrienoate + oxidized [NADPH--hemoprotein reductase] + H2O + H(+). It catalyses the reaction (5Z,8Z,11Z,14Z,17Z)-eicosapentaenoate + reduced [NADPH--hemoprotein reductase] + O2 = 19-hydroxy-(5Z,8Z,11Z,14Z,17Z)-eicosapentaenoate + oxidized [NADPH--hemoprotein reductase] + H2O + H(+). The catalysed reaction is (4Z,7Z,10Z,13Z,16Z,19Z)-docosahexaenoate + reduced [NADPH--hemoprotein reductase] + O2 = 21-hydroxy-(4Z,7Z,10Z,13Z,16Z,19Z)-docosahexaenoate + oxidized [NADPH--hemoprotein reductase] + H2O + H(+). It carries out the reaction dodecanoate + reduced [NADPH--hemoprotein reductase] + O2 = 11-hydroxydodecanoate + oxidized [NADPH--hemoprotein reductase] + H2O + H(+). The enzyme catalyses tetradecanoate + reduced [NADPH--hemoprotein reductase] + O2 = 13-hydroxytetradecanoate + oxidized [NADPH--hemoprotein reductase] + H2O + H(+). It catalyses the reaction 4-nitrophenol + NADPH + O2 + H(+) = 4-nitrocatechol + NADP(+) + H2O. The protein operates within lipid metabolism; fatty acid metabolism. The omega-1 hydroxylase activity is stimulated by cytochrome b5. Functionally, a cytochrome P450 monooxygenase involved in the metabolism of fatty acids. Mechanistically, uses molecular oxygen inserting one oxygen atom into a substrate, and reducing the second into a water molecule, with two electrons provided by NADPH via cytochrome P450 reductase (NADPH--hemoprotein reductase). Catalyzes the hydroxylation of carbon-hydrogen bonds. Hydroxylates fatty acids specifically at the omega-1 position displaying the highest catalytic activity for saturated fatty acids. May be involved in the oxidative metabolism of xenobiotics. The polypeptide is Cytochrome P450 2E1 (CYP2E1) (Macaca mulatta (Rhesus macaque)).